Reading from the N-terminus, the 317-residue chain is Aspartate carbamoyltransferase catalytic subunit (317 aa).

Residues Arg-66 and Thr-67 each coordinate carbamoyl phosphate. Lys-94 provides a ligand contact to L-aspartate. The carbamoyl phosphate site is built by Arg-116, His-144, and Gln-147. 2 residues coordinate L-aspartate: Arg-177 and Arg-231. Residues Gly-272 and Pro-273 each coordinate carbamoyl phosphate.

This sequence belongs to the aspartate/ornithine carbamoyltransferase superfamily. ATCase family. Heterododecamer (2C3:3R2) of six catalytic PyrB chains organized as two trimers (C3), and six regulatory PyrI chains organized as three dimers (R2).

The enzyme catalyses carbamoyl phosphate + L-aspartate = N-carbamoyl-L-aspartate + phosphate + H(+). It participates in pyrimidine metabolism; UMP biosynthesis via de novo pathway; (S)-dihydroorotate from bicarbonate: step 2/3. Functionally, catalyzes the condensation of carbamoyl phosphate and aspartate to form carbamoyl aspartate and inorganic phosphate, the committed step in the de novo pyrimidine nucleotide biosynthesis pathway. The chain is Aspartate carbamoyltransferase catalytic subunit from Rhodopseudomonas palustris (strain BisB5).